The sequence spans 267 residues: Sulfate transporter CysZ (267 aa).

A run of 4 helical transmembrane segments spans residues 29 to 49 (FVIMPILLNIVLLSGLFWLFI), 73 to 93 (ILLIFAILMILVLFYFVFTTL), 149 to 169 (IILFLLGFVPVLGQSVIPIIV), and 212 to 232 (GLVMLCTFIPLVNLVVIPVAV).

Belongs to the CysZ family.

Its subcellular location is the cell inner membrane. Its function is as follows. High affinity, high specificity proton-dependent sulfate transporter, which mediates sulfate uptake. Provides the sulfur source for the cysteine synthesis pathway. The polypeptide is Sulfate transporter CysZ (Pasteurella multocida (strain Pm70)).